The following is a 350-amino-acid chain: Pleckstrin (350 aa).

The PH 1 domain occupies 4–101; the sequence is KRIREGYLVK…WVRDIKKAIK (98 aa). N6-acetyllysine is present on Lys64. Phosphoserine; by PKC occurs at positions 113 and 117. Residues 136–221 enclose the DEP domain; sequence TEKGIKELNL…NPDAFYYFPD (86 aa). A PH 2 domain is found at 244 to 347; the sequence is VIIKQGCLLK…WIRAIQMASR (104 aa).

Major protein kinase C substrate of platelets. This is Pleckstrin (PLEK) from Homo sapiens (Human).